The primary structure comprises 78 residues: Large ribosomal subunit protein bL28 (78 aa).

The segment at 1 to 25 (MSRVCQVTGKRPAVGNNRSHAKNAT) is disordered.

This sequence belongs to the bacterial ribosomal protein bL28 family.

In Aliivibrio fischeri (strain ATCC 700601 / ES114) (Vibrio fischeri), this protein is Large ribosomal subunit protein bL28.